The following is a 491-amino-acid chain: Iota-carrageenase (491 aa).

The first 23 residues, 1-23 (MRLYFRKLWLTNLFLGGALASSA), serve as a signal peptide directing secretion. 4 disulfide bridges follow: Cys-269–Cys-298, Cys-336–Cys-360, Cys-408–Cys-476, and Cys-412–Cys-484.

It belongs to the glycosyl hydrolase 82 family.

Its subcellular location is the secreted. The catalysed reaction is Endohydrolysis of 1,4-beta-D-linkages between D-galactose 4-sulfate and 3,6-anhydro-D-galactose-2-sulfate in iota-carrageenans.. Hydrolyzes iota-carrageenans, sulfated 1,3-alpha-1,4-beta galactans from red algal cell walls, with an inversion of anomeric configuration. Also active against hybrid iota-/nu-carrageenan, not active against kappa- or lambda-carrageenans. The polypeptide is Iota-carrageenase (Alteromonas macleodii (Pseudoalteromonas macleodii)).